The following is a 1299-amino-acid chain: Cilia- and flagella-associated protein 251 (1299 aa).

The segment at 1–351 (MSDTEENPLE…SQKPEDILAQ (351 aa)) is disordered. Composition is skewed to acidic residues over residues 17-45 (EMEE…EEEE), 91-162 (EKEE…EEDA), and 176-189 (ESQE…EWVE). Basic and acidic residues predominate over residues 190-199 (KEEQREGEEV). Over residues 212 to 228 (EEEGWEEEKSGEEEKSE) the composition is skewed to acidic residues. The segment covering 229–257 (ESERSKERGGEEEGQEKEEAEHEGEREEG) has biased composition (basic and acidic residues). Over residues 269 to 280 (REEEEEEEDTET) the composition is skewed to acidic residues. Basic and acidic residues-rich tracts occupy residues 281 to 297 (TETK…EKQN) and 331 to 351 (NSMK…ILAQ). WD repeat units lie at residues 484–526 (PVHT…IWKW), 534–574 (ACTL…CWFE), 585–624 (VLTE…VWDI), 643–678 (PRKL…FYDH), 681–741 (SVVN…VYHM), 745–785 (GTKL…VWDF), 791–828 (LFSR…ILDA), 838–874 (PFKY…MVVV), 881–924 (WEYL…EYNL), 935–975 (LDVH…LFNA), 981–1027 (RKTL…ILPV), 1033–1071 (KTCA…QWKI), 1109–1149 (YFYY…FYPS), and 1169–1209 (GKLI…GYTN).

It localises to the cytoplasm. Its subcellular location is the cytoskeleton. The protein localises to the cilium axoneme. It is found in the cell projection. The protein resides in the cilium. It localises to the flagellum. Involved in spermatozoa motility. May also regulate cilium motility through its role in the assembly of the axonemal radial spokes. This is Cilia- and flagella-associated protein 251 from Mus musculus (Mouse).